The following is an 874-amino-acid chain: Probable leucine--tRNA ligase, cytoplasmic (874 aa).

A 'HIGH' region motif is present at residues 36–46; the sequence is PYMNGRLHLGH. The short motif at 544-548 is the 'KMSKS' region element; that stretch reads KMSKS. Residue K547 coordinates ATP.

Belongs to the class-I aminoacyl-tRNA synthetase family.

The protein resides in the cytoplasm. The enzyme catalyses tRNA(Leu) + L-leucine + ATP = L-leucyl-tRNA(Leu) + AMP + diphosphate. This is Probable leucine--tRNA ligase, cytoplasmic from Encephalitozoon cuniculi (strain GB-M1) (Microsporidian parasite).